A 101-amino-acid chain; its full sequence is NAD(P)H-quinone oxidoreductase subunit 4L, chloroplastic (101 aa).

3 helical membrane passes run 2–22, 32–52, and 61–81; these read MLEHVLVLSAYLFSIGIYGLI, MCLELILNAVNMNLVTFSDLF, and IFSIFVIAIAAAEAAIGPAIV.

Belongs to the complex I subunit 4L family. As to quaternary structure, NDH is composed of at least 16 different subunits, 5 of which are encoded in the nucleus.

The protein localises to the plastid. It localises to the chloroplast thylakoid membrane. The enzyme catalyses a plastoquinone + NADH + (n+1) H(+)(in) = a plastoquinol + NAD(+) + n H(+)(out). The catalysed reaction is a plastoquinone + NADPH + (n+1) H(+)(in) = a plastoquinol + NADP(+) + n H(+)(out). In terms of biological role, NDH shuttles electrons from NAD(P)H:plastoquinone, via FMN and iron-sulfur (Fe-S) centers, to quinones in the photosynthetic chain and possibly in a chloroplast respiratory chain. The immediate electron acceptor for the enzyme in this species is believed to be plastoquinone. Couples the redox reaction to proton translocation, and thus conserves the redox energy in a proton gradient. In Nymphaea alba (White water-lily), this protein is NAD(P)H-quinone oxidoreductase subunit 4L, chloroplastic.